A 277-amino-acid chain; its full sequence is 4-deoxy-L-threo-5-hexosulose-uronate ketol-isomerase (277 aa).

Zn(2+) is bound by residues His195, His197, Glu202, and His244.

This sequence belongs to the KduI family. The cofactor is Zn(2+).

The enzyme catalyses 5-dehydro-4-deoxy-D-glucuronate = 3-deoxy-D-glycero-2,5-hexodiulosonate. Its pathway is glycan metabolism; pectin degradation; 2-dehydro-3-deoxy-D-gluconate from pectin: step 4/5. Catalyzes the isomerization of 5-dehydro-4-deoxy-D-glucuronate to 3-deoxy-D-glycero-2,5-hexodiulosonate. The polypeptide is 4-deoxy-L-threo-5-hexosulose-uronate ketol-isomerase (Oceanobacillus iheyensis (strain DSM 14371 / CIP 107618 / JCM 11309 / KCTC 3954 / HTE831)).